A 312-amino-acid chain; its full sequence is DNA-directed RNA polymerase subunit alpha (312 aa).

Positions 1–226 (MIEFKKPNIT…EHFKAFESAD (226 aa)) are alpha N-terminal domain (alpha-NTD). Residues 243–312 (KEKKLEMTIE…DLGLSLRQED (70 aa)) form an alpha C-terminal domain (alpha-CTD) region.

Belongs to the RNA polymerase alpha chain family. As to quaternary structure, homodimer. The RNAP catalytic core consists of 2 alpha, 1 beta, 1 beta' and 1 omega subunit. When a sigma factor is associated with the core the holoenzyme is formed, which can initiate transcription.

The enzyme catalyses RNA(n) + a ribonucleoside 5'-triphosphate = RNA(n+1) + diphosphate. In terms of biological role, DNA-dependent RNA polymerase catalyzes the transcription of DNA into RNA using the four ribonucleoside triphosphates as substrates. The polypeptide is DNA-directed RNA polymerase subunit alpha (Lactobacillus delbrueckii subsp. bulgaricus (strain ATCC BAA-365 / Lb-18)).